A 261-amino-acid polypeptide reads, in one-letter code: Triosephosphate isomerase (261 aa).

Asn-10–Lys-12 is a binding site for substrate. Catalysis depends on His-100, which acts as the Electrophile. Catalysis depends on Glu-172, which acts as the Proton acceptor. Substrate-binding positions include Gly-178, Ser-218, and Gly-239–Gly-240.

The protein belongs to the triosephosphate isomerase family. In terms of assembly, homodimer.

The protein resides in the cytoplasm. The enzyme catalyses D-glyceraldehyde 3-phosphate = dihydroxyacetone phosphate. It participates in carbohydrate biosynthesis; gluconeogenesis. It functions in the pathway carbohydrate degradation; glycolysis; D-glyceraldehyde 3-phosphate from glycerone phosphate: step 1/1. Its function is as follows. Involved in the gluconeogenesis. Catalyzes stereospecifically the conversion of dihydroxyacetone phosphate (DHAP) to D-glyceraldehyde-3-phosphate (G3P). This is Triosephosphate isomerase from Mycobacterium bovis (strain BCG / Pasteur 1173P2).